The chain runs to 502 residues: Probable malate:quinone oxidoreductase (502 aa).

The protein belongs to the MQO family. FAD is required as a cofactor.

It catalyses the reaction (S)-malate + a quinone = a quinol + oxaloacetate. Its pathway is carbohydrate metabolism; tricarboxylic acid cycle; oxaloacetate from (S)-malate (quinone route): step 1/1. The sequence is that of Probable malate:quinone oxidoreductase from Parasynechococcus marenigrum (strain WH8102).